The chain runs to 1107 residues: Voltage-gated delayed rectifier potassium channel KCNH8 (1107 aa).

Residues 1-225 (MPVMKGLLAP…HFSTFKAGWD (225 aa)) lie on the Cytoplasmic side of the membrane. The PAS domain occupies 18–90 (IATRFDGTHS…LQIEKSLEEK (73 aa)). The 53-residue stretch at 93–145 (FKGEIMFYKKNGSPFWCLLDIVPIKNEKGDVVLFLASFKDITDTKVKITPEDK) folds into the PAC domain. The helical transmembrane segment at 226–246 (WLILLATFYVAVTVPYNVCFI) threads the bilayer. Topologically, residues 247–255 (GNDDLSTTR) are extracellular. The helical transmembrane segment at 256–276 (STTVSDIAVEILFIIDIILNF) threads the bilayer. At 277–298 (RTTYVSKSGQVIFEARSICIHY) the chain is on the cytoplasmic side. Residues 299 to 319 (VTTWFIIDLIAALPFDLLYAF) traverse the membrane as a helical segment. Asn320 carries an N-linked (GlcNAc...) asparagine glycan. At 320–327 (NVTVVSLV) the chain is on the extracellular side. Residues 328–348 (HLLKTVRLLRLLRLLQKLDRY) form a helical; Voltage-sensor membrane-spanning segment. Topologically, residues 349–357 (SQHSTIVLT) are cytoplasmic. A helical membrane pass occupies residues 358 to 378 (LLMSMFALLAHWMACIWYVIG). At 379 to 419 (KMEREDNSLLKWEVGWLHELGKRLESPYYGNNTLGGPSIRS) the chain is on the extracellular side. The N-linked (GlcNAc...) asparagine glycan is linked to Asn409. Residues 420–440 (AYIAALYFTLSSLTSVGFGNV) constitute an intramembrane region (pore-forming). Residues 434-439 (SVGFGN) carry the Selectivity filter motif. The Extracellular portion of the chain corresponds to 441-448 (SANTDAEK). A helical transmembrane segment spans residues 449–469 (IFSICTMLIGALMHALVFGNV). Residues 470–1107 (TAIIQRMYSR…EVKDNKAINV (638 aa)) lie on the Cytoplasmic side of the membrane. The cNMP-binding domain stretch occupies residues 551-668 (LFECASRGCL…HKFVEDIQHD (118 aa)). Polar residues predominate over residues 686–702 (SNKSMVSQSEPKGNGNI). Disordered regions lie at residues 686 to 742 (SNKS…NKKV), 764 to 791 (HSPI…KRKE), 818 to 847 (EDGN…PPLG), and 961 to 989 (VDPS…YHSP). The segment covering 710–724 (VEDEEEEEEGEEEEA) has biased composition (acidic residues). Positions 961-972 (VDPSSVGSSPQR) are enriched in polar residues.

It belongs to the potassium channel family. H (Eag) (TC 1.A.1.20) subfamily. Kv12.1/KCNH8 sub-subfamily. As to quaternary structure, the potassium channel is probably composed of a homo- or heterotetrameric complex of pore-forming alpha subunits that can associate with modulating beta subunits. Primarily expressed in the nervous system.

The protein localises to the membrane. The enzyme catalyses K(+)(in) = K(+)(out). Functionally, pore-forming (alpha) subunit of a voltage-gated delayed rectifier potassium channel that mediates outward-rectifying potassium currents. Elicits a slowly activating, non-inactivating and slowly deactivation outwards potassium current at depolarizating voltages from -30 mV to +50mV. Shows no obvious change in the activation rate from different holding potentials. Activation is strongly dependent on the pH of the external solution. In Homo sapiens (Human), this protein is Voltage-gated delayed rectifier potassium channel KCNH8.